The following is a 166-amino-acid chain: Succinate dehydrogenase assembly factor 2, mitochondrial (166 aa).

Residues 1–29 constitute a mitochondrion transit peptide; sequence MAVVAVFPALARMLAVSRRRLVSPSLSMT.

It belongs to the SDHAF2 family. As to quaternary structure, interacts with SDHA within the SDH catalytic dimer.

The protein resides in the mitochondrion matrix. Plays an essential role in the assembly of succinate dehydrogenase (SDH), an enzyme complex (also referred to as respiratory complex II) that is a component of both the tricarboxylic acid (TCA) cycle and the mitochondrial electron transport chain, and which couples the oxidation of succinate to fumarate with the reduction of ubiquinone (coenzyme Q) to ubiquinol. Required for flavinylation (covalent attachment of FAD) of the flavoprotein subunit SDHA of the SDH catalytic dimer. This Bos taurus (Bovine) protein is Succinate dehydrogenase assembly factor 2, mitochondrial.